The chain runs to 166 residues: Interleukin-2 (166 aa).

Positions 1–20 are cleaved as a signal peptide; the sequence is MYSMQLASCVTLTLVLLVNS. The O-linked (GalNAc...) threonine glycan is linked to threonine 23. Cysteine 89 and cysteine 137 are disulfide-bonded.

The protein belongs to the IL-2 family.

The protein localises to the secreted. Cytokine produced by activated CD4-positive helper T-cells and to a lesser extend activated CD8-positive T-cells and natural killer (NK) cells that plays pivotal roles in the immune response and tolerance. Binds to a receptor complex composed of either the high-affinity trimeric IL-2R (IL2RA/CD25, IL2RB/CD122 and IL2RG/CD132) or the low-affinity dimeric IL-2R (IL2RB and IL2RG). Interaction with the receptor leads to oligomerization and conformation changes in the IL-2R subunits resulting in downstream signaling starting with phosphorylation of JAK1 and JAK3. In turn, JAK1 and JAK3 phosphorylate the receptor to form a docking site leading to the phosphorylation of several substrates including STAT5. This process leads to activation of several pathways including STAT, phosphoinositide-3-kinase/PI3K and mitogen-activated protein kinase/MAPK pathways. Functions as a T-cell growth factor and can increase NK-cell cytolytic activity as well. Promotes strong proliferation of activated B-cells and subsequently immunoglobulin production. Plays a pivotal role in regulating the adaptive immune system by controlling the survival and proliferation of regulatory T-cells, which are required for the maintenance of immune tolerance. Moreover, participates in the differentiation and homeostasis of effector T-cell subsets, including Th1, Th2, Th17 as well as memory CD8-positive T-cells. The sequence is that of Interleukin-2 (Il2) from Mus spretus (Western Mediterranean mouse).